Consider the following 125-residue polypeptide: Scinderin (125 aa).

Y13 bears the Phosphotyrosine mark. Residues 23 to 30 (KGGLKYKA) and 49 to 57 (RLLHVKGRR) each bind a 1,2-diacyl-sn-glycero-3-phospho-(1D-myo-inositol-4,5-bisphosphate). A Gelsolin-like 1 repeat occupies 59–99 (VRATEVPLSWDSFNKGDCFIIDLGSEIYQWFGSSCNKYERL).

It belongs to the villin/gelsolin family.

Its subcellular location is the cytoplasm. It is found in the cytoskeleton. The protein localises to the cell projection. The protein resides in the podosome. Its function is as follows. Ca(2+)-dependent actin filament-severing protein that has a regulatory function in exocytosis by affecting the organization of the microfilament network underneath the plasma membrane. In vitro, also has barbed end capping and nucleating activities in the presence of Ca(2+). Severing activity is inhibited by phosphatidylinositol 4,5-bis-phosphate (PIP2). Required for megakaryocyte differentiation, maturation, polyploidization and apoptosis with the release of platelet-like particles. Plays a role in osteoclastogenesis (OCG) and actin cytoskeletal organization in osteoclasts. Regulates chondrocyte proliferation and differentiation. Inhibits cell proliferation and tumorigenesis. Signaling is mediated by MAPK, p38 and JNK pathways. The chain is Scinderin (SCIN) from Sus scrofa (Pig).